The following is a 1203-amino-acid chain: MLDVNNFEYMKIGLASPEKIRSWSYGEVKKPETINYRTLKPEKDGLFCERIFGPQKDWECHCGKYKRVRYKGVVCDRCGVEVTKAKVRRERMGHIELAAPVSHIWYFKGIPSRMGLVLDMSPRALEEVIYFAAYIVTDPGSTPLEKKQLLSEKEFRSYYDKYGNTFKAQMGAEAIRKLLQDIDLEKEVDALREELKSAQGQRRTRAIKRLEVMEAFRNSGNESSWMILDVLPVIPPEIRPMVQLDGGRFATSDLNDLYRRVINRNNRLKRLLDLGAPSIIVQNEKRMLQEAVDALIDNGRRGRPVTGPGNRPLKSLSHMLKGKQGRFRQNLLGKRVDYSGRSVIVVGPHLKMYQCGLPREMALELFKPFIMKELVSRGLAHNIKSAKRKIERVHPDVWDVLEDVIKEHPVLLNRAPTLHRLGIQAFEPTLVDGRAIRLHPLVCTAYNADFDGDQMAVHVPLGAEAQAEARILMLAAQNILNPKDGKPVVTPSQDMVLGNYYLTLERENAIGEGSYFKDTNEALIAYQTGYAHLHTRVAVQASSLNNKTFTEEQNNKLLLTTVGKLIFNEILPDSFPYINEPTQLNLEEKTPENYFVDPGTSIKEEIQSRELVKPFKKGFLGDIIAEVFKRFQITETSKMLDRMKDLGFSYSTKAGMTVGISDIVVLAEKQGILDEAQTKVDKVLKQFRRGLITEEERYDRVIAIWSEAKDVIQDKLMGSLSNRNPIFMMSDSGARGNASNFTQLAGMRGLMADPAGKIIEIPIKSSFREGLTVMEYFISTHGARKGLADTALKTADSGYLTRRLVDVAQDVIIREDDCGTDRGLTVSALEEGSEVIEPLIDRLIGRTSFENVKHPETGEVIVEKNELISEDQAKTIVESGIQEVIIRSAFTCNTKHGVCQKCYGRNLATGSDVEVGEAVGIIAAQSIGEPGTQLTMRTFHTGGVAGDDITQGLPRIQELFEARNPKGQAVITEIDGTVLEFKEVKDKQEIVVQGEVEQRSYAVPYNARMKVSIGDTVEAGQELTEGSVDPKELLQIKGVEGVQDYLLKEVQRVYRMQGVEIGDKHVEVMVRQMLRKIRVVSSGDTEVLPGSLLELHQFKEANHKVLMEEGEPATGRPVLLGITKASLETDSFLSAASFQETTRVLTDAAIKGKRDELLGLKENVIIGKLVPAGTGMPQYRNLESGLDMPESAEESSEEETQTV.

4 residues coordinate Zn(2+): cysteine 60, cysteine 62, cysteine 75, and cysteine 78. Mg(2+) is bound by residues aspartate 449, aspartate 451, and aspartate 453. Zn(2+) contacts are provided by cysteine 818, cysteine 892, cysteine 899, and cysteine 902. The tract at residues 1180-1203 is disordered; that stretch reads RNLESGLDMPESAEESSEEETQTV. The segment covering 1190-1203 has biased composition (acidic residues); that stretch reads ESAEESSEEETQTV.

It belongs to the RNA polymerase beta' chain family. In terms of assembly, the RNAP catalytic core consists of 2 alpha, 1 beta, 1 beta' and 1 omega subunit. When a sigma factor is associated with the core the holoenzyme is formed, which can initiate transcription. Mg(2+) is required as a cofactor. Zn(2+) serves as cofactor.

The enzyme catalyses RNA(n) + a ribonucleoside 5'-triphosphate = RNA(n+1) + diphosphate. Its function is as follows. DNA-dependent RNA polymerase catalyzes the transcription of DNA into RNA using the four ribonucleoside triphosphates as substrates. The sequence is that of DNA-directed RNA polymerase subunit beta' from Oceanobacillus iheyensis (strain DSM 14371 / CIP 107618 / JCM 11309 / KCTC 3954 / HTE831).